A 208-amino-acid chain; its full sequence is Proheparin-binding EGF-like growth factor (208 aa).

A signal peptide spans 1–19; it reads MKLLPSVVLKLFLAAVLSA. A propeptide spans 20–62 (or 72, or 73, or 76, or 81); the sequence is LVTGESLERLRRGLAAGTSNPDPPTVSTDQLLPLGGGRDRKVR. Residues 20–160 lie on the Extracellular side of the membrane; that stretch reads LVTGESLERL…ENRLYTYDHT (141 aa). Positions 33–56 are disordered; it reads LAAGTSNPDPPTVSTDQLLPLGGG. The span at 36–49 shows a compositional bias: polar residues; sequence GTSNPDPPTVSTDQ. T37 carries an O-linked (GalNAc...) threonine glycan. An O-linked (GalNAc...) serine glycan is attached at S38. Residues T44, T47, T75, and T85 are each glycosylated (O-linked (GalNAc...) threonine). The tract at residues 82–104 is disordered; the sequence is ALATPNKEEHGKRKKKGKGLGKK. Residues 93-102 show a composition bias toward basic residues; it reads KRKKKGKGLG. The EGF-like domain maps to 104-144; that stretch reads KRDPCLRKYKDFCIHGECKYVKELRAPSCICHPGYHGERCH. Intrachain disulfides connect C108/C121, C116/C132, and C134/C143. Residues 149-208 constitute a propeptide, C-terminal; sequence PVENRLYTYDHTTILAVVAVVLSSVCLLVIVGLLMFRYHRRGGYDVENEEKVKLGMTNSH. A helical transmembrane segment spans residues 161–184; sequence TILAVVAVVLSSVCLLVIVGLLMF. The Cytoplasmic portion of the chain corresponds to 185 to 208; the sequence is RYHRRGGYDVENEEKVKLGMTNSH.

Interacts with FBLN1. Interacts with EGFR and ERBB4. In terms of processing, several N-termini have been identified by direct sequencing. The forms with N-termini 63, 73 and 74 have been tested and found to be biologically active. O-glycosylated with core 1 or possibly core 8 glycans. Thr-47 is a minor glycosylation site compared to Thr-44.

Its subcellular location is the secreted. It localises to the extracellular space. It is found in the cell membrane. Functionally, growth factor that mediates its effects via EGFR, ERBB2 and ERBB4. Required for normal cardiac valve formation and normal heart function. Promotes smooth muscle cell proliferation. May be involved in macrophage-mediated cellular proliferation. It is mitogenic for fibroblasts, but not endothelial cells. It is able to bind EGF receptor/EGFR with higher affinity than EGF itself and is a far more potent mitogen for smooth muscle cells than EGF. Also acts as a diphtheria toxin receptor. This chain is Proheparin-binding EGF-like growth factor (HBEGF), found in Homo sapiens (Human).